The primary structure comprises 184 residues: Dirigent protein 13 (184 aa).

The N-terminal stretch at 1–25 (MANQIYIISLIFLSVLLYQSTTVLS) is a signal peptide. Cys36 and Cys182 are oxidised to a cystine. Residues Asn55 and Asn119 are each glycosylated (N-linked (GlcNAc...) asparagine).

It belongs to the plant dirigent protein family. In terms of assembly, homodimer. In terms of tissue distribution, expressed in root vasculature and meristems, cotyledons, flowers, siliques, and leaf trichomes. Localized in the interfascicular/vascular cambia and developing xylem.

The protein localises to the secreted. Its subcellular location is the extracellular space. It localises to the apoplast. Functionally, dirigent proteins impart stereoselectivity on the phenoxy radical-coupling reaction, yielding optically active lignans from two molecules of coniferyl alcohol in the biosynthesis of lignans, flavonolignans, and alkaloids and thus plays a central role in plant secondary metabolism. The polypeptide is Dirigent protein 13 (DIR13) (Arabidopsis thaliana (Mouse-ear cress)).